A 405-amino-acid chain; its full sequence is Serine-type anaerobic sulfatase-maturating enzyme (405 aa).

Residues 18–249 (PRSPVPFHIL…QWRKRCDRGR (232 aa)) form the Radical SAM core domain. [4Fe-4S] cluster-binding residues include Cys35 and Cys39. Tyr41 lines the S-adenosyl-L-methionine pocket. Cys42 contributes to the [4Fe-4S] cluster binding site. S-adenosyl-L-methionine contacts are provided by Gly84, Ser140, and Arg152. Cys270, Cys276, and Cys291 together coordinate [4Fe-4S] cluster. Catalysis depends on Asp292, which acts as the Proton acceptor. [4Fe-4S] cluster contacts are provided by Cys331, Cys334, Cys340, Cys344, and Cys357.

The protein belongs to the radical SAM superfamily. Anaerobic sulfatase-maturating enzyme family. In terms of assembly, monomer. Interacts with AtsA prior to its export to the periplasm. Requires [4Fe-4S] cluster as cofactor.

It localises to the cytoplasm. It catalyses the reaction L-seryl-[sulfatase] + S-adenosyl-L-methionine = 3-oxo-L-alanyl-[sulfatase] + 5'-deoxyadenosine + L-methionine + H(+). It participates in protein modification; sulfatase oxidation. Functionally, involved in 'Ser-type' sulfatase maturation under anaerobic conditions. Catalyzes the post-translational modification of serine ('Ser-72' in the arylsulfatase AtsA) into 3-oxoalanine (also known as C(alpha)-formylglycine (FGly)), by a free radical chemical mechanism initiated via the reductive cleavage of S-adenosyl-L-methionine (SAM). The chain is Serine-type anaerobic sulfatase-maturating enzyme from Klebsiella aerogenes (Enterobacter aerogenes).